Reading from the N-terminus, the 207-residue chain is Guanylate kinase (207 aa).

The region spanning 5 to 184 is the Guanylate kinase-like domain; sequence GNLFIVSAPS…ALADLRAIIR (180 aa). Residue 12–19 participates in ATP binding; it reads APSGAGKS.

This sequence belongs to the guanylate kinase family.

The protein localises to the cytoplasm. It catalyses the reaction GMP + ATP = GDP + ADP. Essential for recycling GMP and indirectly, cGMP. The chain is Guanylate kinase from Shewanella sp. (strain MR-7).